Reading from the N-terminus, the 145-residue chain is Basic phospholipase A2 beta-bungarotoxin A-AL1 chain (145 aa).

The first 17 residues, 1-17 (MLIFLWCGAVCVSLLGA), serve as a signal peptide directing secretion. A propeptide spanning residues 18–25 (ANIPPHPL) is cleaved from the precursor. Cystine bridges form between Cys-52-Cys-144, Cys-54-Cys-70, Cys-76-Cys-118, Cys-86-Cys-111, and Cys-104-Cys-116. 3 residues coordinate Ca(2+): Tyr-53, Gly-55, and Gly-57. The active site involves His-73. The active site involves Asp-119.

This sequence belongs to the phospholipase A2 family. Group I subfamily. G49 sub-subfamily. Heterodimer; disulfide-linked. The A chains have phospholipase A2 activity and the B chains show homology with the basic protease inhibitors. Requires Ca(2+) as cofactor. This enzyme lacks one of the seven disulfide bonds found in similar PLA2 proteins. In terms of tissue distribution, expressed by the venom gland.

The protein localises to the secreted. It carries out the reaction a 1,2-diacyl-sn-glycero-3-phosphocholine + H2O = a 1-acyl-sn-glycero-3-phosphocholine + a fatty acid + H(+). Snake venom phospholipase A2 (PLA2) that inhibits neuromuscular transmission by blocking acetylcholine release from the nerve termini. PLA2 catalyzes the calcium-dependent hydrolysis of the 2-acyl groups in 3-sn-phosphoglycerides. This is Basic phospholipase A2 beta-bungarotoxin A-AL1 chain from Bungarus multicinctus (Many-banded krait).